A 62-amino-acid chain; its full sequence is Translational regulator CsrA (62 aa).

It belongs to the CsrA/RsmA family. As to quaternary structure, homodimer; the beta-strands of each monomer intercalate to form a hydrophobic core, while the alpha-helices form wings that extend away from the core.

The protein resides in the cytoplasm. In terms of biological role, a key translational regulator that binds mRNA to regulate translation initiation and/or mRNA stability. Mediates global changes in gene expression, shifting from rapid growth to stress survival by linking envelope stress, the stringent response and the catabolite repression systems. Usually binds in the 5'-UTR; binding at or near the Shine-Dalgarno sequence prevents ribosome-binding, repressing translation, binding elsewhere in the 5'-UTR can activate translation and/or stabilize the mRNA. Its function is antagonized by small RNA(s). The chain is Translational regulator CsrA from Haemophilus ducreyi (strain 35000HP / ATCC 700724).